A 493-amino-acid polypeptide reads, in one-letter code: Glutamyl-tRNA(Gln) amidotransferase subunit A (493 aa).

Catalysis depends on charge relay system residues Lys79 and Ser159. Catalysis depends on Ser183, which acts as the Acyl-ester intermediate.

The protein belongs to the amidase family. GatA subfamily. As to quaternary structure, heterotrimer of A, B and C subunits.

It carries out the reaction L-glutamyl-tRNA(Gln) + L-glutamine + ATP + H2O = L-glutaminyl-tRNA(Gln) + L-glutamate + ADP + phosphate + H(+). Functionally, allows the formation of correctly charged Gln-tRNA(Gln) through the transamidation of misacylated Glu-tRNA(Gln) in organisms which lack glutaminyl-tRNA synthetase. The reaction takes place in the presence of glutamine and ATP through an activated gamma-phospho-Glu-tRNA(Gln). This chain is Glutamyl-tRNA(Gln) amidotransferase subunit A, found in Rhizobium etli (strain ATCC 51251 / DSM 11541 / JCM 21823 / NBRC 15573 / CFN 42).